A 724-amino-acid polypeptide reads, in one-letter code: Disks large homolog 4 (724 aa).

Residues Cys-3 and Cys-5 are each lipidated (S-palmitoyl cysteine). Positions 15-35 (QDEDTPPLEHSPAHLPNQANS) are disordered. 2 consecutive PDZ domains span residues 65-151 (EITL…VMRR) and 160-246 (EIKL…VAKP). Phosphoserine occurs at positions 73 and 142. Tyr-240 carries the phosphotyrosine modification. At Ser-295 the chain carries Phosphoserine. The PDZ 3 domain maps to 313–393 (RIVIHRGSTG…QTVTIIAQYK (81 aa)). Residues Ser-415 and Ser-418 each carry the phosphoserine modification. Thr-420 carries the phosphothreonine modification. 4 positions are modified to phosphoserine: Ser-422, Ser-425, Ser-449, and Ser-480. Residues 428–498 (KRGFYIRALF…PSKRRVERRE (71 aa)) enclose the SH3 domain. The 176-residue stretch at 534 to 709 (ARPIIILGPT…IYHKVKRVIE (176 aa)) folds into the Guanylate kinase-like domain. Tyr-580 bears the Phosphotyrosine mark. 2 positions are modified to phosphoserine: Ser-606 and Ser-654. Tyr-715 is subject to Phosphotyrosine.

The protein belongs to the MAGUK family. As to quaternary structure, interacts through its PDZ domains with ANO2 and NETO1. Interacts through its first two PDZ domains with GRIN2A, GRIN2B, GRIN2C, GRIN2D. Interacts with ASIC3. Interacts with SEMA4C. Interacts with CXADR. Interacts with KCND2. Interacts with SYNGAP1. Interacts with LRRC4 and LRRC4B. Interacts with ERBB4. Interacts with KCNA1, KCNA2, KCNA3 and KCNA4. Interacts through its first PDZ domain with GRIK2, KCNA4 and CRIPT. Interacts through its second PDZ domain with the PDZ domain of NOS1 or the C-terminus of CAPON. Interacts through its third PDZ domain with NLGN1 and CRIPT, and probably with NLGN2 and NLGN3. Interacts through its guanylate kinase-like domain with KIF13B. Interacts through its guanylate kinase-like domain with DLGAP1/GKAP, DLGAP2, DLGAP3, DLGAP4, MAP1A, BEGAIN and SIPA1L1. Isoform 2 interacts through an L27 domain with HGS/HRS and the first L27 domain of CASK. Interacts with ADR1B and ANKS1B. May interact with HTR2A. Interacts with ADAM22. Interacts with KLHL17 and LGI1. Interacts with FRMPD4 (via C-terminus). Interacts with LRFN1, LRFN2 and LRFN4. Interacts (via N-terminal tandem pair of PDZ domains) with GPER1 (via C-terminus tail motif); the interaction is direct and induces the increase of GPER1 protein levels residing at the plasma membrane surface in a estradiol-independent manner. Interacts (via N-terminus tandem pair of PDZ domains) with NOS1 (via N-terminal domain). Interacts with SHANK3. Interacts with KCNJ4. Interacts with GPR85. Interacts with CACNG2 and MPP2 (via the SH3-Guanylate kinase-like sub-module). Interacts with ADGRB1. Found in a complex with PRR7 and GRIN1. Interacts (via PDZ3 domain and to lesser degree via PDZ2 domain) with PRR7. Component of the postsynaptic hippocampal AMPA-type glutamate receptor (AMPAR) complex, at least composed of pore forming AMPAR subunits GRIA1, GRIA2 and GRIA3 and AMPAR auxiliary proteins SHISA6 and SHISA7. Interacts (via its first two PDZ domains) with SHISA6 and SHISA7 (via PDZ-binding motif); the interaction is direct. Interacts with RPH3A and GRIN2A; this ternary complex regulates NMDA receptor composition at postsynaptic membranes. Interacts with ABR and BCR. Interacts with DGKI (via PDZ-binding motif); controls the localization of DGKI to the synapse. Interacts with C9orf72, SMCR8 and RAB39B. Interacts with ZDHHC5. Interacts with PTEN (via PDZ domain-binding motif); the interaction is induced by NMDA and is required for PTEN location at postsynaptic density. Found in a complex with GRIA1, GRIA2, GRIA3, GRIA4, CACNG8 and CNIH2. Interacts with FAM81A; the interaction facilitates condensate formation via liquid-liquid phase separation. Interacts with ADGRL3. Interacts with SORCS3. Post-translationally, palmitoylated. Palmitoylation is required for targeting to postsynaptic density, plasma membrane and synapses. Palmitoylation by ZDHHC2 occurs when the synaptic activity decreases and induces DLG4 synaptic clustering. Palmitoylation by ZDHHC15 regulates trafficking to the postsynaptic density and function in synaptogenesis. Palmitoylation may play a role in glutamate receptor GRIA1 synapse clustering. Depalmitoylated by ABHD17A and ABHD17B and to a lesser extent by ABHD17C, ABHD12, ABHD13, LYPLA1 and LYPLA2. Undergoes rapid synaptic palmitoylation/depalmitoylation cycles during neuronal development which slow down in mature neurons. In terms of processing, ubiquitinated by MDM2 in response to NMDA receptor activation, leading to proteasome-mediated degradation of DLG4 which is required for AMPA receptor endocytosis. In terms of tissue distribution, brain.

The protein localises to the cell membrane. The protein resides in the postsynaptic density. Its subcellular location is the synapse. It is found in the cytoplasm. It localises to the cell projection. The protein localises to the axon. The protein resides in the dendritic spine. Its subcellular location is the dendrite. It is found in the presynapse. Functionally, postsynaptic scaffolding protein that plays a critical role in synaptogenesis and synaptic plasticity by providing a platform for the postsynaptic clustering of crucial synaptic proteins. Interacts with the cytoplasmic tail of NMDA receptor subunits and shaker-type potassium channels. Required for synaptic plasticity associated with NMDA receptor signaling. Overexpression or depletion of DLG4 changes the ratio of excitatory to inhibitory synapses in hippocampal neurons. May reduce the amplitude of ASIC3 acid-evoked currents by retaining the channel intracellularly. May regulate the intracellular trafficking of ADR1B. Also regulates AMPA-type glutamate receptor (AMPAR) immobilization at postsynaptic density keeping the channels in an activated state in the presence of glutamate and preventing synaptic depression. Under basal conditions, cooperates with FYN to stabilize palmitoyltransferase ZDHHC5 at the synaptic membrane through FYN-mediated phosphorylation of ZDHHC5 and its subsequent inhibition of association with endocytic proteins. This Homo sapiens (Human) protein is Disks large homolog 4.